Reading from the N-terminus, the 114-residue chain is Flagellar hook-basal body complex protein FliE (114 aa).

The protein belongs to the FliE family.

Its subcellular location is the bacterial flagellum basal body. The protein is Flagellar hook-basal body complex protein FliE of Desulfitobacterium hafniense (strain DSM 10664 / DCB-2).